Here is a 450-residue protein sequence, read N- to C-terminus: Methionine aminopeptidase 2 (450 aa).

The disordered stretch occupies residues 1–99; it reads MAVQAPEVDK…LFPNSQYPEG (99 aa). The span at 33-49 shows a compositional bias: acidic residues; the sequence is GDEDAENEESDEDDDQG. Basic residues predominate over residues 60 to 75; that stretch reads KKKRKRKPKKKKKKGV. His200 serves as a coordination point for substrate. Positions 220, 231, and 300 each coordinate a divalent metal cation. A substrate-binding site is contributed by His308. A divalent metal cation is bound by residues Glu336 and Glu431.

It belongs to the peptidase M24A family. Methionine aminopeptidase eukaryotic type 2 subfamily. It depends on Co(2+) as a cofactor. Zn(2+) serves as cofactor. The cofactor is Mn(2+). Fe(2+) is required as a cofactor.

Its subcellular location is the cytoplasm. It carries out the reaction Release of N-terminal amino acids, preferentially methionine, from peptides and arylamides.. Cotranslationally removes the N-terminal methionine from nascent proteins. The N-terminal methionine is often cleaved when the second residue in the primary sequence is small and uncharged (Met-Ala-, Cys, Gly, Pro, Ser, Thr, or Val). This is Methionine aminopeptidase 2 from Uncinocarpus reesii (strain UAMH 1704).